The primary structure comprises 358 residues: Probable D-xylulose reductase A (358 aa).

Residues cysteine 47, histidine 72, and glutamate 73 each coordinate Zn(2+). 182 to 187 contributes to the NAD(+) binding site; sequence GAGPVG.

Belongs to the zinc-containing alcohol dehydrogenase family. Zn(2+) is required as a cofactor.

It catalyses the reaction xylitol + NAD(+) = D-xylulose + NADH + H(+). The protein operates within carbohydrate degradation; L-arabinose degradation via L-arabinitol; D-xylulose 5-phosphate from L-arabinose (fungal route): step 4/5. Xylitol dehydrogenase which catalyzes the conversion of xylitol to D-xylulose. Xylose is a major component of hemicelluloses such as xylan. Most fungi utilize D-xylose via three enzymatic reactions, xylose reductase (XR), xylitol dehydrogenase (XDH), and xylulokinase, to form xylulose 5-phosphate, which enters pentose phosphate pathway. The chain is Probable D-xylulose reductase A (xdhA) from Neosartorya fischeri (strain ATCC 1020 / DSM 3700 / CBS 544.65 / FGSC A1164 / JCM 1740 / NRRL 181 / WB 181) (Aspergillus fischerianus).